The sequence spans 504 residues: WD repeat-containing protein 55 homolog (504 aa).

Residues 32–49 (QEVVNESDSEIGEYDLGD) are compositionally biased toward acidic residues. Positions 32–135 (QEVVNESDSE…NAFDMDEDDE (104 aa)) are disordered. Residues 66-76 (DSISSDGSFNP) are compositionally biased toward polar residues. Residues 77-95 (NDEDSDTDSDDSMLDEPDE) are compositionally biased toward acidic residues. Polar residues predominate over residues 114–124 (SGSSNRNQDSD). WD repeat units lie at residues 158 to 197 (KLED…NKLL), 202 to 241 (VHAK…LKKL), 245 to 283 (AHDD…SIFE), 286 to 325 (EIED…LYVQ), 328 to 367 (PYEE…YHCD), and 412 to 451 (QHNM…DFGD). Residues 484–504 (AKEDNNDNENDDATAGPSNTT) are disordered.

The protein belongs to the WD repeat WDR55 family.

In Drosophila willistoni (Fruit fly), this protein is WD repeat-containing protein 55 homolog.